A 338-amino-acid polypeptide reads, in one-letter code: Methionine synthase (338 aa).

Residues His-211, Cys-213, and Cys-294 each coordinate Zn(2+).

The protein belongs to the archaeal MetE family. Requires Zn(2+) as cofactor.

It participates in amino-acid biosynthesis; L-methionine biosynthesis via de novo pathway. In terms of biological role, catalyzes the transfer of a methyl group to L-homocysteine resulting in methionine formation. The physiological methyl donor is unknown. This is Methionine synthase from Sulfurisphaera tokodaii (strain DSM 16993 / JCM 10545 / NBRC 100140 / 7) (Sulfolobus tokodaii).